The following is a 391-amino-acid chain: MSSENLPQSPERAESPQAPRRKPRVAVVFGGRSSEHGISVVTAGAVMRAIDRTTYDVLPIGITTDGRWALTADEPERMAITDRKVPDVDRLTESAEGSVVLSVDPGSREVVYTEPGSVPKALGEVDVVFPVLHGPYGEDGTLQGLLELSGVPYVGAGVLASAVGQDKEYMKRVFLSFGLPVGPYEVVRPREWDNDPAAARERIVDFAGEHGWPLFIKPARGGSSMGITKVDSVEGLDAAIEEARRHDPKFLVESLLRGREIECGVLEFEDGPRASVPAEIPPVTSHDFYDFEAKYIDSAAGLVPAPLTEEQTAEVRRLAVAAFDAVSCEGLVRADFFLTEDGTFVINEINTLPGFTPISMYPRMWQESGVDYPELVDRLIQAALSRSTGLR.

Residues M1–R24 form a disordered region. Residues K171–Q381 form the ATP-grasp domain. A207–E262 contributes to the ATP binding site. The Mg(2+) site is built by D335, E348, and N350.

The protein belongs to the D-alanine--D-alanine ligase family. The cofactor is Mg(2+). Requires Mn(2+) as cofactor.

The protein localises to the cytoplasm. It catalyses the reaction 2 D-alanine + ATP = D-alanyl-D-alanine + ADP + phosphate + H(+). It participates in cell wall biogenesis; peptidoglycan biosynthesis. Cell wall formation. The polypeptide is D-alanine--D-alanine ligase (Streptomyces griseus subsp. griseus (strain JCM 4626 / CBS 651.72 / NBRC 13350 / KCC S-0626 / ISP 5235)).